The primary structure comprises 434 residues: Serine hydroxymethyltransferase (434 aa).

(6S)-5,6,7,8-tetrahydrofolate is bound by residues Leu-132 and 136–138; that span reads GHL. Residue Lys-241 is modified to N6-(pyridoxal phosphate)lysine.

Belongs to the SHMT family. In terms of assembly, homodimer. The cofactor is pyridoxal 5'-phosphate.

Its subcellular location is the cytoplasm. The enzyme catalyses (6R)-5,10-methylene-5,6,7,8-tetrahydrofolate + glycine + H2O = (6S)-5,6,7,8-tetrahydrofolate + L-serine. It functions in the pathway one-carbon metabolism; tetrahydrofolate interconversion. It participates in amino-acid biosynthesis; glycine biosynthesis; glycine from L-serine: step 1/1. In terms of biological role, catalyzes the reversible interconversion of serine and glycine with tetrahydrofolate (THF) serving as the one-carbon carrier. This reaction serves as the major source of one-carbon groups required for the biosynthesis of purines, thymidylate, methionine, and other important biomolecules. Also exhibits THF-independent aldolase activity toward beta-hydroxyamino acids, producing glycine and aldehydes, via a retro-aldol mechanism. The sequence is that of Serine hydroxymethyltransferase from Kineococcus radiotolerans (strain ATCC BAA-149 / DSM 14245 / SRS30216).